A 415-amino-acid polypeptide reads, in one-letter code: PRKCA-binding protein (415 aa).

In terms of domain architecture, PDZ spans 22–105 (KVTLQKDAQN…EVTIHYNKLQ (84 aa)). Residues Cys-44 and Cys-46 each coordinate Zn(2+). Thr-82 carries the phosphothreonine modification. Residues 144–357 (LCNDGLVKRL…CYAVLRDADV (214 aa)) enclose the AH domain. A disordered region spans residues 376–415 (EEFTDGEEEEEEEDTAAGEPSRDTRGAAGPLDKGGSWCDS). Over residues 377–391 (EFTDGEEEEEEEDTA) the composition is skewed to acidic residues. Cys-413 carries the S-palmitoyl cysteine; by DHHC8 lipid modification.

As to quaternary structure, monomer and homodimer. Interacts with CXADR. Interacts presynaptically with the glutamate receptors GRIA2, GRIA3, GRIK3, isoform 3 of GRIA4, isoform A of GRM4, GRM7 and GRM8; with NAPA and NAPB; and with BTG2. The interaction with NAPA and NAPB disrupts the interaction with GRIA2, conducting to the internalization of GRIA2. Interacts with PRKCA; with the amine transporters SLC6A2 and SLC6A3; with the channels ASIC1 and ASIC2; with the GTP-binding proteins ARF1 and ARF3; with the ephrin receptor tyrosine kinases EPHA7, EPHB1 and EPHB2; with ERBB2 and through its PDZ domain with the C-terminal tail of PRLHR. Interacts with UNC5A. Interacts (via AH domain) with NCS1/FREQ; in a calcium-dependent manner. Interacts with F-actin and associates with the ARP2/3 complex. Interacts (via PDZ domain) with ARF1 (activated); the interaction blocks Arp2/3 complex inhibition. Interacts with SORCS3. In terms of processing, phosphorylation at Thr-82 appears to inhibit the interaction with AMPA receptors. Post-translationally, palmitoylation on Cys-413 is essential for long-term synaptic depression (LTD). Ubiquitous.

It localises to the cytoplasm. Its subcellular location is the perinuclear region. It is found in the membrane. The protein localises to the postsynaptic density. The protein resides in the synapse. It localises to the synaptosome. Its subcellular location is the cytoskeleton. Its function is as follows. Probable adapter protein that bind to and organize the subcellular localization of a variety of membrane proteins containing some PDZ recognition sequence. Involved in the clustering of various receptors, possibly by acting at the receptor internalization level. Plays a role in synaptic plasticity by regulating the trafficking and internalization of AMPA receptors. May be regulated upon PRKCA activation. May regulate ASIC1/ASIC3 channel. Regulates actin polymerization by inhibiting the actin-nucleating activity of the Arp2/3 complex; the function is competitive with nucleation promoting factors and is linked to neuronal morphology regulation and AMPA receptor (AMPAR) endocytosis. Via interaction with the Arp2/3 complex involved in regulation of synaptic plasicity of excitatory synapses and required for spine shrinkage during long-term depression (LTD). Involved in regulation of astrocyte morphology, antagonistic to Arp2/3 complex activator WASL/N-WASP function. This chain is PRKCA-binding protein (PICK1), found in Homo sapiens (Human).